The following is a 296-amino-acid chain: Pantothenate synthetase (296 aa).

30–37 is a binding site for ATP; the sequence is MGNLHEGH. Residue His-37 is the Proton donor of the active site. A (R)-pantoate-binding site is contributed by Gln-61. Gln-61 is a beta-alanine binding site. 149–152 contacts ATP; the sequence is GEKD. Position 155 (Gln-155) interacts with (R)-pantoate. Residues Val-178 and 186–189 contribute to the ATP site; that span reads MSSR.

Belongs to the pantothenate synthetase family. Homodimer.

It is found in the cytoplasm. It carries out the reaction (R)-pantoate + beta-alanine + ATP = (R)-pantothenate + AMP + diphosphate + H(+). It functions in the pathway cofactor biosynthesis; (R)-pantothenate biosynthesis; (R)-pantothenate from (R)-pantoate and beta-alanine: step 1/1. Catalyzes the condensation of pantoate with beta-alanine in an ATP-dependent reaction via a pantoyl-adenylate intermediate. In Vibrio atlanticus (strain LGP32) (Vibrio splendidus (strain Mel32)), this protein is Pantothenate synthetase.